The chain runs to 245 residues: Probable phosphatase CKO_02035 (245 aa).

The Zn(2+) site is built by histidine 7, histidine 9, histidine 15, histidine 40, glutamate 73, histidine 101, histidine 131, aspartate 192, and histidine 194.

Belongs to the PHP family. Homotrimer. The cofactor is Zn(2+).

In Citrobacter koseri (strain ATCC BAA-895 / CDC 4225-83 / SGSC4696), this protein is Probable phosphatase CKO_02035.